We begin with the raw amino-acid sequence, 45 residues long: Large ribosomal subunit protein bL36 (45 aa).

The tract at residues 1–20 (MKVSSSIKADPSKGDKLVRR) is disordered.

Belongs to the bacterial ribosomal protein bL36 family.

This Chlamydia abortus (strain DSM 27085 / S26/3) (Chlamydophila abortus) protein is Large ribosomal subunit protein bL36.